A 375-amino-acid chain; its full sequence is DNA replication and repair protein RecF (375 aa).

Position 30–37 (30–37) interacts with ATP; that stretch reads GENAQGKT.

This sequence belongs to the RecF family.

The protein resides in the cytoplasm. In terms of biological role, the RecF protein is involved in DNA metabolism; it is required for DNA replication and normal SOS inducibility. RecF binds preferentially to single-stranded, linear DNA. It also seems to bind ATP. The polypeptide is DNA replication and repair protein RecF (Enterococcus faecalis (strain ATCC 700802 / V583)).